The sequence spans 881 residues: Valine--tRNA ligase (881 aa).

The 'HIGH' region motif lies at 48-58; it reads PNITGKLHLGH. The 'KMSKS' region motif lies at 527–531; sequence KMSKS. Lys530 provides a ligand contact to ATP. Coiled-coil stretches lie at residues 721-747 and 811-881; these read KNET…AEMN and LLDL…AALK.

Belongs to the class-I aminoacyl-tRNA synthetase family. ValS type 1 subfamily. As to quaternary structure, monomer.

Its subcellular location is the cytoplasm. The catalysed reaction is tRNA(Val) + L-valine + ATP = L-valyl-tRNA(Val) + AMP + diphosphate. Functionally, catalyzes the attachment of valine to tRNA(Val). As ValRS can inadvertently accommodate and process structurally similar amino acids such as threonine, to avoid such errors, it has a 'posttransfer' editing activity that hydrolyzes mischarged Thr-tRNA(Val) in a tRNA-dependent manner. The sequence is that of Valine--tRNA ligase from Clostridium acetobutylicum (strain ATCC 824 / DSM 792 / JCM 1419 / IAM 19013 / LMG 5710 / NBRC 13948 / NRRL B-527 / VKM B-1787 / 2291 / W).